A 627-amino-acid polypeptide reads, in one-letter code: uncharacterized protein (627 aa).

Disordered stretches follow at residues 441–466 and 608–627; these read EAVP…QGEN and DLRG…TEDR. A compositionally biased stretch (basic and acidic residues) spans 615–627; it reads DYERGKGESTEDR.

This is an uncharacterized protein from Homo sapiens (Human).